The sequence spans 676 residues: Mediator of RNA polymerase II transcription subunit 17 (676 aa).

Disordered regions lie at residues 27–68 (IGSK…QFSN) and 117–176 (IEND…TQDT). Low complexity predominate over residues 29-40 (SKSTSPHSNSTS). Composition is skewed to basic and acidic residues over residues 47–56 (HNTENEEVDN) and 120–134 (DNGKQESKDDTKAED). Acidic residues predominate over residues 135 to 145 (GIDTMDIDQND). Residues 146-160 (NSEANTNDIGYNEWS) are compositionally biased toward polar residues.

The protein belongs to the Mediator complex subunit 17 family. In terms of assembly, component of the Mediator complex.

It is found in the nucleus. Its function is as follows. Component of the Mediator complex, a coactivator involved in the regulated transcription of nearly all RNA polymerase II-dependent genes. Mediator functions as a bridge to convey information from gene-specific regulatory proteins to the basal RNA polymerase II transcription machinery. Mediator is recruited to promoters by direct interactions with regulatory proteins and serves as a scaffold for the assembly of a functional preinitiation complex with RNA polymerase II and the general transcription factors. The protein is Mediator of RNA polymerase II transcription subunit 17 (SRB4) of Candida glabrata (strain ATCC 2001 / BCRC 20586 / JCM 3761 / NBRC 0622 / NRRL Y-65 / CBS 138) (Yeast).